A 407-amino-acid chain; its full sequence is DNA primase DnaG (407 aa).

One can recognise a Toprim domain in the interval 172–248 (DWIIVVEGRA…HIDYVARAPP (77 aa)). Residues Glu178, Asp222, and Asp224 each contribute to the Mg(2+) site. Residues 279-304 (AGAEKTEAAAPPPQQPTAPPAAPSQQ) are disordered. The segment covering 288-300 (APPPQQPTAPPAA) has biased composition (pro residues).

Belongs to the archaeal DnaG primase family. In terms of assembly, forms a ternary complex with MCM helicase and DNA. Component of the archaeal exosome complex. Mg(2+) serves as cofactor.

It catalyses the reaction ssDNA + n NTP = ssDNA/pppN(pN)n-1 hybrid + (n-1) diphosphate.. Functionally, RNA polymerase that catalyzes the synthesis of short RNA molecules used as primers for DNA polymerase during DNA replication. Also part of the exosome, which is a complex involved in RNA degradation. Acts as a poly(A)-binding protein that enhances the interaction between heteromeric, adenine-rich transcripts and the exosome. The chain is DNA primase DnaG from Pyrobaculum calidifontis (strain DSM 21063 / JCM 11548 / VA1).